The sequence spans 453 residues: MARKAVSRKRKAPALPGAGSDAQDPQFGWDHSLHKRKRLPPVKRSLVYYLKNREVRLQNETSYSRVLHGYAAQQLPSLLKEREFHLGTLNKVFASQWLNHRQVVCGTKCNTLFVVDVQTSQITKIPILKDREPGCVTQQGCGIHAIELNPSRTLLATGGDNPNSLAIYRLPTLDPVCVGDDGHKDWIFSIAWISDTMAVSGSRDGSMGLWEVTDDVLTKSDARHNVSRVPVYSHITHKALKDIPKEDTNPDNCKVRALAFNNKNKELGAVSLDGYFHLWKTENTLSKLLSTKLPYCRENVCLAYGNEWSVYAVGSQAHVSFLDPRQPSYNVKSVCSRERGSGIRSVSFYEHIITVGTGQGSLLFYDIRAQRFLEEKLSACYGSKPKLAGENLKLTTGKGWLNHDETWRNYFSDIDFFPNAVYTHCYDSSGTKLFVAGGPLPSGLHGNYAGLWS.

Residues 1-12 (MARKAVSRKRKA) show a composition bias toward basic residues. The tract at residues 1 to 27 (MARKAVSRKRKAPALPGAGSDAQDPQF) is disordered. Residues 1 to 38 (MARKAVSRKRKAPALPGAGSDAQDPQFGWDHSLHKRKR) are required for nuclear location and interaction with MOV10. WD repeat units follow at residues 138-178 (QQGC…PVCV), 182-220 (GHKD…LTKS), 250-289 (PDNC…SKLL), and 338-375 (ERGS…FLEE).

It belongs to the WD repeat DCAF12 family. In terms of assembly, component of the DCX(DCAF12) E3 ubiquitin ligase complex, at least composed of CUL4 (CUL4A or CUL4B), DDB1, DCAF12 and RBX1.

Its subcellular location is the cytoplasm. It localises to the cytoskeleton. The protein resides in the microtubule organizing center. The protein localises to the centrosome. It is found in the nucleus. It participates in protein modification; protein ubiquitination. Its function is as follows. Substrate-recognition component of a DCX (DDB1-CUL4-X-box) E3 ubiquitin-protein ligase complex of the DesCEND (destruction via C-end degrons) pathway, which recognizes a C-degron located at the extreme C terminus of target proteins, leading to their ubiquitination and degradation. The C-degron recognized by the DesCEND pathway is usually a motif of less than ten residues and can be present in full-length proteins, truncated proteins or proteolytically cleaved forms. The DCX(DCAF12) complex specifically recognizes proteins with a diglutamate (Glu-Glu) at the C-terminus, such as MAGEA3, MAGEA6 and CCT5, leading to their ubiquitination and degradation. Ubiquitination of MAGEA3, MAGEA6 by DCX(DCAF12) complex is required for starvation-induced autophagy. Also directly recognizes the C-terminal glutamate-leucine (Glu-Leu) degron as an alternative degron in proteins such as MOV10, leading to their ubiquitination and degradation. Controls the protein level of MOV10 during spermatogenesis and in T cells, especially after their activation. The chain is DDB1- and CUL4-associated factor 12 (DCAF12) from Bos taurus (Bovine).